Reading from the N-terminus, the 317-residue chain is tRNA dimethylallyltransferase (317 aa).

13 to 20 (GPTASGKS) provides a ligand contact to ATP. 15–20 (TASGKS) contributes to the substrate binding site.

It belongs to the IPP transferase family. Monomer. It depends on Mg(2+) as a cofactor.

It carries out the reaction adenosine(37) in tRNA + dimethylallyl diphosphate = N(6)-dimethylallyladenosine(37) in tRNA + diphosphate. Catalyzes the transfer of a dimethylallyl group onto the adenine at position 37 in tRNAs that read codons beginning with uridine, leading to the formation of N6-(dimethylallyl)adenosine (i(6)A). This is tRNA dimethylallyltransferase from Kineococcus radiotolerans (strain ATCC BAA-149 / DSM 14245 / SRS30216).